Consider the following 101-residue polypeptide: Large ribosomal subunit protein uL23 (101 aa).

Belongs to the universal ribosomal protein uL23 family. As to quaternary structure, part of the 50S ribosomal subunit. Contacts protein L29, and trigger factor when it is bound to the ribosome.

Functionally, one of the early assembly proteins it binds 23S rRNA. One of the proteins that surrounds the polypeptide exit tunnel on the outside of the ribosome. Forms the main docking site for trigger factor binding to the ribosome. The sequence is that of Large ribosomal subunit protein uL23 from Mannheimia succiniciproducens (strain KCTC 0769BP / MBEL55E).